A 493-amino-acid chain; its full sequence is Glutamate--tRNA ligase (493 aa).

Positions 10–20 match the 'HIGH' region motif; it reads PSPTGDPHVGT. Positions 251-255 match the 'KMSKS' region motif; the sequence is KLSKR. Lys254 contributes to the ATP binding site.

The protein belongs to the class-I aminoacyl-tRNA synthetase family. Glutamate--tRNA ligase type 1 subfamily. As to quaternary structure, monomer.

The protein localises to the cytoplasm. It catalyses the reaction tRNA(Glu) + L-glutamate + ATP = L-glutamyl-tRNA(Glu) + AMP + diphosphate. In terms of biological role, catalyzes the attachment of glutamate to tRNA(Glu) in a two-step reaction: glutamate is first activated by ATP to form Glu-AMP and then transferred to the acceptor end of tRNA(Glu). This chain is Glutamate--tRNA ligase, found in Pseudomonas fluorescens (strain Pf0-1).